A 147-amino-acid chain; its full sequence is Ribosome maturation factor RimP (147 aa).

Belongs to the RimP family.

It localises to the cytoplasm. Functionally, required for maturation of 30S ribosomal subunits. This chain is Ribosome maturation factor RimP, found in Legionella pneumophila (strain Lens).